Here is a 95-residue protein sequence, read N- to C-terminus: Hge-scorpine (95 aa).

Residues 1–19 (MNTKLTVLCFLGIVTIVSC) form the signal peptide. In terms of domain architecture, BetaSPN-type CS-alpha/beta spans 55-94 (QFGCFANVDVKGDCKRHCKAEDKEGICHGTKCKCGVPISY). Disulfide bonds link C58–C81, C68–C86, and C72–C88.

It belongs to the long chain scorpion toxin family. Class 3 subfamily. Expressed by the venom gland.

The protein localises to the secreted. Its function is as follows. Has antibacterial activity against B.subtilis, but not against S.aureus. Also has hemolytic and cytolytic activities. Since cell lysis occurs at the tested concentrations, observation of activity on potassium channels is impossible. In terms of biological role, blocks Kv1.1/KCNA1 (IC(50)=185 nM) potassium channels. Shows a weak hemolytic activity. This chain is Hge-scorpine, found in Hoffmannihadrurus gertschi (Scorpion).